The primary structure comprises 67 residues: Small ribosomal subunit protein eS17 (67 aa).

Belongs to the eukaryotic ribosomal protein eS17 family.

This chain is Small ribosomal subunit protein eS17, found in Thermococcus gammatolerans (strain DSM 15229 / JCM 11827 / EJ3).